Consider the following 82-residue polypeptide: Small ribosomal subunit protein bS16 (82 aa).

Belongs to the bacterial ribosomal protein bS16 family.

The sequence is that of Small ribosomal subunit protein bS16 from Haemophilus influenzae (strain 86-028NP).